The sequence spans 388 residues: LL-diaminopimelate aminotransferase (388 aa).

Substrate contacts are provided by Tyr-15 and Gly-40. Pyridoxal 5'-phosphate-binding positions include Tyr-69, 103-104 (SK), Tyr-128, Asn-178, Tyr-209, and 237-239 (SLS). Lys-104, Tyr-128, and Asn-178 together coordinate substrate. An N6-(pyridoxal phosphate)lysine modification is found at Lys-240. Arg-248 lines the pyridoxal 5'-phosphate pocket. Arg-366 serves as a coordination point for substrate.

The protein belongs to the class-I pyridoxal-phosphate-dependent aminotransferase family. LL-diaminopimelate aminotransferase subfamily. Homodimer. Pyridoxal 5'-phosphate is required as a cofactor.

It carries out the reaction (2S,6S)-2,6-diaminopimelate + 2-oxoglutarate = (S)-2,3,4,5-tetrahydrodipicolinate + L-glutamate + H2O + H(+). It functions in the pathway amino-acid biosynthesis; L-lysine biosynthesis via DAP pathway; LL-2,6-diaminopimelate from (S)-tetrahydrodipicolinate (aminotransferase route): step 1/1. Involved in the synthesis of meso-diaminopimelate (m-DAP or DL-DAP), required for both lysine and peptidoglycan biosynthesis. Catalyzes the direct conversion of tetrahydrodipicolinate to LL-diaminopimelate. Can also use m-DAP instead of LL-DAP as the amino-group donor. The chain is LL-diaminopimelate aminotransferase from Syntrophobacter fumaroxidans (strain DSM 10017 / MPOB).